We begin with the raw amino-acid sequence, 241 residues long: Uridylate kinase (241 aa).

ATP is bound at residue 15–18 (KLSG). The involved in allosteric activation by GTP stretch occupies residues 23–28 (GSEGFG). Gly57 provides a ligand contact to UMP. Residues Gly58 and Arg62 each coordinate ATP. UMP contacts are provided by residues Asp77 and 138–145 (TGNPFFTT). ATP-binding residues include Thr165, Phe171, and Asp174.

Belongs to the UMP kinase family. In terms of assembly, homohexamer.

It is found in the cytoplasm. The catalysed reaction is UMP + ATP = UDP + ADP. The protein operates within pyrimidine metabolism; CTP biosynthesis via de novo pathway; UDP from UMP (UMPK route): step 1/1. With respect to regulation, allosterically activated by GTP. Inhibited by UTP. Its function is as follows. Catalyzes the reversible phosphorylation of UMP to UDP. The polypeptide is Uridylate kinase (Klebsiella pneumoniae subsp. pneumoniae (strain ATCC 700721 / MGH 78578)).